The sequence spans 351 residues: Peptide chain release factor 1 (351 aa).

Glutamine 229 is subject to N5-methylglutamine.

The protein belongs to the prokaryotic/mitochondrial release factor family. Post-translationally, methylated by PrmC. Methylation increases the termination efficiency of RF1.

It localises to the cytoplasm. In terms of biological role, peptide chain release factor 1 directs the termination of translation in response to the peptide chain termination codons UAG and UAA. This Cereibacter sphaeroides (strain KD131 / KCTC 12085) (Rhodobacter sphaeroides) protein is Peptide chain release factor 1.